The primary structure comprises 379 residues: Cytochrome b (379 aa).

Transmembrane regions (helical) follow at residues 33–53 (LGSL…FLAM), 77–98 (WTIR…YLHI), 113–133 (WNTG…GYVL), and 178–198 (FFTL…THLL). Residues H83 and H97 each coordinate heme b. Heme b-binding residues include H182 and H196. H201 contributes to the a ubiquinone binding site. 4 helical membrane-spanning segments follow: residues 226–246 (IKDI…TLLH), 288–308 (LGGV…PMTH), 320–340 (ISQC…WIGG), and 347–367 (FTTI…ILTP).

Belongs to the cytochrome b family. In terms of assembly, the cytochrome bc1 complex contains 11 subunits: 3 respiratory subunits (MT-CYB, CYC1 and UQCRFS1), 2 core proteins (UQCRC1 and UQCRC2) and 6 low-molecular weight proteins (UQCRH/QCR6, UQCRB/QCR7, UQCRQ/QCR8, UQCR10/QCR9, UQCR11/QCR10 and a cleavage product of UQCRFS1). This cytochrome bc1 complex then forms a dimer. The cofactor is heme b.

The protein localises to the mitochondrion inner membrane. Functionally, component of the ubiquinol-cytochrome c reductase complex (complex III or cytochrome b-c1 complex) that is part of the mitochondrial respiratory chain. The b-c1 complex mediates electron transfer from ubiquinol to cytochrome c. Contributes to the generation of a proton gradient across the mitochondrial membrane that is then used for ATP synthesis. The sequence is that of Cytochrome b (MT-CYB) from Bradypus tridactylus (Pale-throated three-toed sloth).